A 320-amino-acid polypeptide reads, in one-letter code: Ribosomal large subunit pseudouridine synthase C (320 aa).

The S4 RNA-binding domain maps to 20–83 (QRIDNFLLAK…AEREEVQVSA (64 aa)). D144 is a catalytic residue.

This sequence belongs to the pseudouridine synthase RluA family.

The enzyme catalyses uridine(955/2504/2580) in 23S rRNA = pseudouridine(955/2504/2580) in 23S rRNA. Functionally, responsible for synthesis of pseudouridine from uracil at positions 955, 2504 and 2580 in 23S ribosomal RNA. The sequence is that of Ribosomal large subunit pseudouridine synthase C (rluC) from Yersinia pestis.